Reading from the N-terminus, the 395-residue chain is Phosphoglycerate kinase (395 aa).

Substrate-binding positions include 21–23 (DLN), Arg36, 59–62 (HLGR), Arg113, and Arg146. Residues Lys197, Glu324, and 350–353 (GGDT) each bind ATP.

This sequence belongs to the phosphoglycerate kinase family. In terms of assembly, monomer.

The protein resides in the cytoplasm. It carries out the reaction (2R)-3-phosphoglycerate + ATP = (2R)-3-phospho-glyceroyl phosphate + ADP. It participates in carbohydrate degradation; glycolysis; pyruvate from D-glyceraldehyde 3-phosphate: step 2/5. The sequence is that of Phosphoglycerate kinase from Acinetobacter baumannii (strain ACICU).